Here is a 1082-residue protein sequence, read N- to C-terminus: RE1-silencing transcription factor (1082 aa).

The segment at 32–117 (DLHELSKAEL…SLELSAVEPQ (86 aa)) is interaction with SIN3A. The interval 43 to 57 (APQLIMLANVALTGE) is interaction with SIN3B. The segment at 140–413 (PVAEDKCRSS…KSKHPTCPSK (274 aa)) is interaction with ZFP90. Residues 154–176 (FRCKPCQYEAESEEQFVHHIRIH) form a C2H2-type 1 zinc finger. A required for binding to the neuron-restrictive silencer element region spans residues 196–207 (SGSSPAEEGEFS). 7 C2H2-type zinc fingers span residues 211–235 (IRCD…HHLR), 243–265 (YKCI…LRNH), 271–293 (YTCS…VRTH), 299–321 (YKCE…MRTH), 327–350 (FKCD…RQVH), 356–378 (LNCP…VELH), and 384–407 (FNCP…KSKH). Disordered stretches follow at residues 408-809 (PTCP…ELSL) and 831-1027 (SKLL…KAGL). The segment covering 440-475 (EKMENEQTKTKGDVSGKKNEKPVKAVGKDASKEKKP) has biased composition (basic and acidic residues). The span at 477 to 497 (SSVSVVQVTTRTRKSAVAAET) shows a compositional bias: low complexity. The span at 581 to 597 (KGTKKTPPKTKTSKKGG) shows a compositional bias: basic residues. A compositionally biased stretch (polar residues) spans 630 to 640 (VTGSGSSQTEL). 2 stretches are compositionally biased toward pro residues: residues 684–713 (YPQP…PAPP) and 729–751 (KEPP…PPPM). Composition is skewed to basic and acidic residues over residues 798–807 (LRKDRAEKEL) and 854–864 (NSREETPKDQE). Polar residues predominate over residues 900–909 (RVSSSEQNSA). Serine 950 is modified (phosphoserine). Positions 985–1063 (EGIHSHDGSD…HLNRHLVNVY (79 aa)) are interaction with RCOR1. The C2H2-type 9 zinc finger occupies 1036–1058 (FVCIFCDRSFRKEKDYSKHLNRH).

As to quaternary structure, isoform 1 and isoform 2 form heterodimers. Isoform 2: Forms homodimers and homooligomers; binds to the neuron-restrictive silencer element (NRSE) as monomer. Interacts with SIN3A, SIN3B and RCOR1. Interacts with CDYL. Interacts with EHMT1 and EHMT2 only in the presence of CDYL. Part of a complex containing at least CDYL, REST, WIZ, SETB1, EHMT1 and EHMT2. Interacts (via zinc-finger DNA-binding domain) with ZFP90 (via N- and C-termini); the interaction inhibits REST repressor activity. Interacts (via C2H2-type zinc finger 5) with PRICKLE1. Interacts with FBXW11 and BTRC. Interacts with USP7. In terms of processing, O-glycosylated. Post-translationally, phosphorylated; phosphorylation is required for ubiquitination. Ubiquitinated; ubiquitination is mediated by BTRC and leads to proteasomal degradation in G2 phase. Ubiquitination increases during neuronal differentiation. Deubiquitinated by USP7; leading to its stabilization and promoting the maintenance of neural progenitor cells. Expressed in the hippocampus, including quiescent neuronal progenitor (QNP) cells, transient-amplifying progenitor (TAP) cells, neuroblasts and mature neurons (at protein level). Expressed in embryonic stem cells (at protein level). Expressed in many non-neuronal tissues including the heart and liver. Abundantly expressed in osteoblastic lineage cells. Expressed in the spleen, kidney, blood cells, cortex, neocortex and in the utricle, saccule and organ of Corti of the inner ear. Isoform 2: Expressed in the cortex, neocortex and in the utricle, saccule and organ of Corti of the inner ear.

The protein resides in the nucleus. Its subcellular location is the cytoplasm. Functionally, transcriptional repressor which binds neuron-restrictive silencer element (NRSE) and represses neuronal gene transcription in non-neuronal cells. Restricts the expression of neuronal genes by associating with two distinct corepressors, SIN3A and RCOR1, which in turn recruit histone deacetylase to the promoters of REST-regulated genes. Mediates repression by recruiting the BHC complex at RE1/NRSE sites which acts by deacetylating and demethylating specific sites on histones, thereby acting as a chromatin modifier. Transcriptional repression by REST-CDYL via the recruitment of histone methyltransferase EHMT2 may be important in transformation suppression. Represses the expression of SRRM4 in non-neural cells to prevent the activation of neural-specific splicing events and to prevent production of REST isoform 2. Repressor activity may be inhibited by forming heterodimers with isoform 2, thereby preventing binding to NRSE or binding to corepressors and leading to derepression of target genes. Also maintains repression of neuronal genes in neural stem cells, and allows transcription and differentiation into neurons by dissociation from RE1/NRSE sites of target genes. Thereby is involved in maintaining the quiescent state of adult neural stem cells and preventing premature differentiation into mature neurons. Plays a role in the developmental switch in synaptic NMDA receptor composition during postnatal development, by repressing GRIN2B expression and thereby altering NMDA receptor properties from containing primarily GRIN2B to primarily GRIN2A subunits. Acts as a regulator of osteoblast differentiation. Key repressor of gene expression in hypoxia; represses genes in hypoxia by direct binding to an RE1/NRSE site on their promoter regions. May also function in stress resistance in the brain during aging; possibly by regulating expression of genes involved in cell death and in the stress response. Repressor of gene expression in the hippocampus after ischemia by directly binding to RE1/NRSE sites and recruiting SIN3A and RCOR1 to promoters of target genes, thereby promoting changes in chromatin modifications and ischemia-induced cell death. After ischemia, might play a role in repression of miR-132 expression in hippocampal neurons, thereby leading to neuronal cell death. Binds to the 3' region of the neuron-restrictive silencer element (NRSE), with lower affinity than isoform 1. Exhibits weaker repressor activity compared to isoform 1. May negatively regulate the repressor activity of isoform 1 by binding to isoform 1, thereby preventing its binding to NRSE and leading to derepression of target genes. However, in another study, does not appear to be implicated in repressor activity of a NRSE motif-containing reporter construct nor in inhibitory activity on the isoform 1 transcriptional repressor activity. Post-transcriptional inactivation of REST by SRRM4-dependent alternative splicing into isoform 2 is required in mechanosensory hair cells in the inner ear for derepression of neuronal genes, maintenance of hair cells and hearing. This is RE1-silencing transcription factor (Rest) from Mus musculus (Mouse).